We begin with the raw amino-acid sequence, 102 residues long: Small ribosomal subunit protein uS10 (102 aa).

Belongs to the universal ribosomal protein uS10 family. In terms of assembly, part of the 30S ribosomal subunit.

Functionally, involved in the binding of tRNA to the ribosomes. In Acidiphilium cryptum (strain JF-5), this protein is Small ribosomal subunit protein uS10.